Reading from the N-terminus, the 250-residue chain is 2,3-bisphosphoglycerate-dependent phosphoglycerate mutase (250 aa).

Residues 10 to 17, 23 to 24, Arg-62, 89 to 92, Lys-100, 116 to 117, and 185 to 186 contribute to the substrate site; these read RHGESQWN, TG, ERHY, RR, and GN. His-11 serves as the catalytic Tele-phosphohistidine intermediate. Glu-89 functions as the Proton donor/acceptor in the catalytic mechanism.

It belongs to the phosphoglycerate mutase family. BPG-dependent PGAM subfamily. In terms of assembly, homodimer.

It carries out the reaction (2R)-2-phosphoglycerate = (2R)-3-phosphoglycerate. The protein operates within carbohydrate degradation; glycolysis; pyruvate from D-glyceraldehyde 3-phosphate: step 3/5. Functionally, catalyzes the interconversion of 2-phosphoglycerate and 3-phosphoglycerate. This is 2,3-bisphosphoglycerate-dependent phosphoglycerate mutase from Cronobacter sakazakii (strain ATCC BAA-894) (Enterobacter sakazakii).